A 384-amino-acid polypeptide reads, in one-letter code: Chaperone protein DnaJ (384 aa).

Positions 5 to 70 (DYYEVLGVSK…DKKAAYDRYG (66 aa)) constitute a J domain. Positions 16–47 (ASSDDIKKGYRRKAKELHPDRNKDDPNAEAQF) are disordered. Positions 31-47 (ELHPDRNKDDPNAEAQF) are enriched in basic and acidic residues. The segment at 143–221 (GLQKTINVPT…CQGAGRVEKD (79 aa)) adopts a CR-type zinc-finger fold. 8 residues coordinate Zn(2+): cysteine 156, cysteine 159, cysteine 173, cysteine 176, cysteine 195, cysteine 198, cysteine 209, and cysteine 212. CXXCXGXG motif repeat units follow at residues 156-163 (CKTCNGSG), 173-180 (CPTCSGMG), 195-202 (CPTCSGLG), and 209-216 (CKSCQGAG).

This sequence belongs to the DnaJ family. As to quaternary structure, homodimer. Zn(2+) is required as a cofactor.

The protein localises to the cytoplasm. In terms of biological role, participates actively in the response to hyperosmotic and heat shock by preventing the aggregation of stress-denatured proteins and by disaggregating proteins, also in an autonomous, DnaK-independent fashion. Unfolded proteins bind initially to DnaJ; upon interaction with the DnaJ-bound protein, DnaK hydrolyzes its bound ATP, resulting in the formation of a stable complex. GrpE releases ADP from DnaK; ATP binding to DnaK triggers the release of the substrate protein, thus completing the reaction cycle. Several rounds of ATP-dependent interactions between DnaJ, DnaK and GrpE are required for fully efficient folding. Also involved, together with DnaK and GrpE, in the DNA replication of plasmids through activation of initiation proteins. In Roseobacter denitrificans (strain ATCC 33942 / OCh 114) (Erythrobacter sp. (strain OCh 114)), this protein is Chaperone protein DnaJ.